We begin with the raw amino-acid sequence, 1030 residues long: Halotolerance protein 9 (1030 aa).

Positions 136-166 form a DNA-binding region, zn(2)-C6 fungal-type; that stretch reads CDHCRKRKIRCDEVDQQTKKCSNCIKFQLPC. The segment at 185–208 is disordered; the sequence is HHATPGESLQTSNSISNPVASSSV. The segment covering 196-208 has biased composition (low complexity); it reads SNSISNPVASSSV. Phosphoserine occurs at positions 221 and 937.

The protein localises to the cytoplasm. Its subcellular location is the nucleus. Functionally, putative transcription factor involved in halotolerance. The chain is Halotolerance protein 9 (HAL9) from Saccharomyces cerevisiae (strain ATCC 204508 / S288c) (Baker's yeast).